The primary structure comprises 102 residues: Small ribosomal subunit protein uS10 (102 aa).

This sequence belongs to the universal ribosomal protein uS10 family. In terms of assembly, part of the 30S ribosomal subunit.

Involved in the binding of tRNA to the ribosomes. In Ligilactobacillus salivarius (strain UCC118) (Lactobacillus salivarius), this protein is Small ribosomal subunit protein uS10.